The sequence spans 391 residues: tRNA (cytosine(38)-C(5))-methyltransferase (391 aa).

The SAM-dependent MTase C5-type domain maps to Leu-4–Asp-391. Residues Ile-13–Gly-15, Asp-34, Ile-57–Glu-58, and Ser-76 contribute to the S-adenosyl-L-methionine site. Cys-79 is a catalytic residue. Ser-376 is an S-adenosyl-L-methionine binding site.

Belongs to the class I-like SAM-binding methyltransferase superfamily. C5-methyltransferase family.

It is found in the cytoplasm. It carries out the reaction cytidine(38) in tRNA + S-adenosyl-L-methionine = 5-methylcytidine(38) in tRNA + S-adenosyl-L-homocysteine + H(+). Its function is as follows. Specifically methylates cytosine 38 in the anticodon loop of tRNA(Asp). Has higher activity on tRNA(Asp) modified with queuosine at position 34. The polypeptide is tRNA (cytosine(38)-C(5))-methyltransferase (TRDMT1) (Bos taurus (Bovine)).